The primary structure comprises 519 residues: Cytosol aminopeptidase (519 aa).

Ser42 carries the phosphoserine modification. Lys45 carries the N6-succinyllysine modification. Ser54 is subject to Phosphoserine. Lys61 and Lys103 each carry N6-succinyllysine. Residues Ser180 and Ser194 each carry the phosphoserine modification. Residues Leu202, Met203, and Thr205 each contribute to the Zn(2+) site. Ser238 carries the phosphoserine modification. Zn(2+) contacts are provided by Lys282 and Asp287. Substrate contacts are provided by Lys282, Asp287, Ser292, and Lys294. Residue Asp287 participates in Mg(2+) binding. Lys294 is an active-site residue. 4 residues coordinate Zn(2+): Arg303, Asp305, Asp364, and Glu366. Substrate is bound by residues Asp305 and Asp364. Mg(2+) contacts are provided by Asp364 and Glu366. Arg368 is an active-site residue. The residue at position 455 (Lys455) is an N6-acetyllysine; alternate. Residue Lys455 is modified to N6-succinyllysine; alternate. Position 476 is an N6-succinyllysine (Lys476). N6-acetyllysine; alternate is present on Lys489. Lys489 is modified (N6-succinyllysine; alternate).

This sequence belongs to the peptidase M17 family. In terms of assembly, homohexamer. The cofactor is Zn(2+). Mn(2+) is required as a cofactor.

It localises to the cytoplasm. It catalyses the reaction Release of an N-terminal amino acid, Xaa-|-Yaa-, in which Xaa is preferably Leu, but may be other amino acids including Pro although not Arg or Lys, and Yaa may be Pro. Amino acid amides and methyl esters are also readily hydrolyzed, but rates on arylamides are exceedingly low.. The catalysed reaction is an S-substituted L-cysteinylglycine + H2O = an S-substituted L-cysteine + glycine. The enzyme catalyses L-cysteinylglycine + H2O = L-cysteine + glycine. It carries out the reaction S-benzyl-L-cysteinylglycine + H2O = S-benzyl-L-cysteine + glycine. It catalyses the reaction Release of N-terminal proline from a peptide.. With respect to regulation, zofenoprilat inhibits Cys-Gly hydrolysis activity. Its function is as follows. Cytosolic metallopeptidase that catalyzes the removal of unsubstituted N-terminal hydrophobic amino acids from various peptides. The presence of Zn(2+) ions is essential for the peptidase activity, and the association with other cofactors can modulate the substrate spectificity of the enzyme. For instance, in the presence of Mn(2+), it displays a specific Cys-Gly hydrolyzing activity of Cys-Gly-S-conjugates. Involved in the metabolism of glutathione and in the degradation of glutathione S-conjugates, which may play a role in the control of the cell redox status. This Bos taurus (Bovine) protein is Cytosol aminopeptidase.